The chain runs to 502 residues: Glycerol kinase (502 aa).

T14 provides a ligand contact to ADP. ATP-binding residues include T14, T15, and S16. Sn-glycerol 3-phosphate is bound at residue T14. R18 contacts ADP. 4 residues coordinate sn-glycerol 3-phosphate: R84, E85, Y136, and D246. Residues R84, E85, Y136, D246, and Q247 each contribute to the glycerol site. T268 and G311 together coordinate ADP. Residues T268, G311, Q315, and G412 each coordinate ATP. ADP-binding residues include G412 and N416.

It belongs to the FGGY kinase family. Homotetramer and homodimer (in equilibrium). Heterodimer with EIIA-Glc. Binds 1 zinc ion per glycerol kinase EIIA-Glc dimer. The zinc ion is important for dimerization.

The enzyme catalyses glycerol + ATP = sn-glycerol 3-phosphate + ADP + H(+). It functions in the pathway polyol metabolism; glycerol degradation via glycerol kinase pathway; sn-glycerol 3-phosphate from glycerol: step 1/1. Its activity is regulated as follows. Activity of this regulatory enzyme is affected by several metabolites. Allosterically and non-competitively inhibited by fructose 1,6-bisphosphate (FBP) and unphosphorylated phosphocarrier protein EIIA-Glc (III-Glc), an integral component of the bacterial phosphotransferase (PTS) system. Its function is as follows. Key enzyme in the regulation of glycerol uptake and metabolism. Catalyzes the phosphorylation of glycerol to yield sn-glycerol 3-phosphate. The protein is Glycerol kinase of Shigella boydii serotype 18 (strain CDC 3083-94 / BS512).